A 580-amino-acid polypeptide reads, in one-letter code: Kelch-like protein 38 (580 aa).

A BTB domain is found at 34 to 101; sequence TDVSICSGAC…VYTGEVHISA (68 aa). Residues 136 to 237 form the BACK domain; the sequence is CLGLVRLAEI…HPAFFHHFIA (102 aa). Kelch repeat units lie at residues 284 to 331, 333 to 382, 383 to 430, 432 to 478, 479 to 520, and 522 to 572; these read FLLL…TLHR, VYVL…THRN, FIFS…VKDQ, LYLF…VLGE, KIII…VMGN, and LYVT…TLQC.

The sequence is that of Kelch-like protein 38 (Klhl38) from Rattus norvegicus (Rat).